The sequence spans 210 residues: uncharacterized protein (210 aa).

This is an uncharacterized protein from Dictyostelium discoideum (Social amoeba).